The following is a 343-amino-acid chain: Photosystem II protein D1 (343 aa).

The next 3 helical transmembrane spans lie at 28–45 (YIGW…VSTV), 117–132 (HFLA…EYEY), and 141–155 (WIYL…AASA). H117 provides a ligand contact to chlorophyll a. W125 lines the pheophytin a pocket. Residues D169 and E188 each contribute to the [CaMn4O5] cluster site. A helical membrane pass occupies residues 196-217 (FHILGVSAVFGGSLFSAMHGSL). H197 contacts chlorophyll a. Residues H214 and 263–264 (SF) each bind a quinone. H214 contributes to the Fe cation binding site. Position 271 (H271) interacts with Fe cation. The helical transmembrane segment at 273 to 287 (FLAAWPVIGIWCTAI) threads the bilayer. Residues H331, E332, D341, and A343 each coordinate [CaMn4O5] cluster.

This sequence belongs to the reaction center PufL/M/PsbA/D family. As to quaternary structure, PSII is composed of 1 copy each of membrane proteins PsbA, PsbB, PsbC, PsbD, PsbE, PsbF, PsbH, PsbI, PsbJ, PsbK, PsbL, PsbM, PsbT, PsbX, PsbY, PsbZ, Psb30/Ycf12, at least 3 peripheral proteins of the oxygen-evolving complex and a large number of cofactors. It forms dimeric complexes. The cofactor is The D1/D2 heterodimer binds P680, chlorophylls that are the primary electron donor of PSII, and subsequent electron acceptors. It shares a non-heme iron and each subunit binds pheophytin, quinone, additional chlorophylls, carotenoids and lipids. D1 provides most of the ligands for the Mn4-Ca-O5 cluster of the oxygen-evolving complex (OEC). There is also a Cl(-1) ion associated with D1 and D2, which is required for oxygen evolution. The PSII complex binds additional chlorophylls, carotenoids and specific lipids.. In terms of processing, tyr-160 forms a radical intermediate that is referred to as redox-active TyrZ, YZ or Y-Z.

It is found in the plastid. The protein resides in the chloroplast thylakoid membrane. It catalyses the reaction 2 a plastoquinone + 4 hnu + 2 H2O = 2 a plastoquinol + O2. Functionally, photosystem II (PSII) is a light-driven water:plastoquinone oxidoreductase that uses light energy to abstract electrons from H(2)O, generating O(2) and a proton gradient subsequently used for ATP formation. It consists of a core antenna complex that captures photons, and an electron transfer chain that converts photonic excitation into a charge separation. The D1/D2 (PsbA/PsbD) reaction center heterodimer binds P680, the primary electron donor of PSII as well as several subsequent electron acceptors. The polypeptide is Photosystem II protein D1 (Prorocentrum micans (Red tide dinoflagellate)).